We begin with the raw amino-acid sequence, 259 residues long: DNA-directed RNA polymerase 30 kDa polypeptide (259 aa).

The TFIIS-type zinc finger occupies 155 to 195 (YNTPCPNCKSRNTTPMMIQTRAADEPPLVRHACRDCKQHFK). Positions 159, 162, 187, and 190 each coordinate Zn(2+). The segment at 220–259 (EILPDNNPSPPESPEPASPIDDGLIRVTFDRNDEPPEDDE) is disordered. Residues 226 to 236 (NPSPPESPEPA) show a composition bias toward pro residues.

This sequence belongs to the poxviridae DNA-directed RNA polymerase 30 kDa subunit family. The DNA-dependent RNA polymerase (vRNAP) consists of eight subunits encoded by early viral genes and termed according to their apparent molecular masses Rpo147, Rpo132, Rpo35, Rpo30, Rpo22, Rpo19, Rpo18, and Rpo7. The same holoenzyme, with the addition of the transcription-specificity factor RAP94, is used for early gene expression.

It is found in the virion. Its subcellular location is the host cytoplasm. It catalyses the reaction RNA(n) + a ribonucleoside 5'-triphosphate = RNA(n+1) + diphosphate. Functionally, part of the DNA-dependent RNA polymerase which catalyzes the transcription of viral DNA into RNA using the four ribonucleoside triphosphates as substrates. Responsible for the transcription of early, intermediate and late genes. DNA-dependent RNA polymerase associates with the early transcription factor (ETF), itself composed of OPG118 and OPG134, thereby allowing the early genes transcription. Late transcription, and probably also intermediate transcription, require newly synthesized RNA polymerase. This is DNA-directed RNA polymerase 30 kDa polypeptide (OPG066) from Variola virus (isolate Human/India/Ind3/1967) (VARV).